The primary structure comprises 120 residues: Glycine cleavage system H protein (120 aa).

Residues 19 to 101 (DGTVGITDHA…YEGGWLFKLE (83 aa)) enclose the Lipoyl-binding domain. An N6-lipoyllysine modification is found at Lys-60.

This sequence belongs to the GcvH family. In terms of assembly, the glycine cleavage system is composed of four proteins: P, T, L and H. (R)-lipoate serves as cofactor.

Functionally, the glycine cleavage system catalyzes the degradation of glycine. The H protein shuttles the methylamine group of glycine from the P protein to the T protein. In Deinococcus deserti (strain DSM 17065 / CIP 109153 / LMG 22923 / VCD115), this protein is Glycine cleavage system H protein.